Reading from the N-terminus, the 38-residue chain is Large ribosomal subunit protein bL36 (38 aa).

This sequence belongs to the bacterial ribosomal protein bL36 family.

The chain is Large ribosomal subunit protein bL36 from Mycoplasma mobile (strain ATCC 43663 / 163K / NCTC 11711) (Mesomycoplasma mobile).